The following is a 327-amino-acid chain: Ferredoxin--NADP reductase (327 aa).

Positions 18, 37, 45, 50, 90, 124, 283, and 324 each coordinate FAD.

This sequence belongs to the ferredoxin--NADP reductase type 2 family. In terms of assembly, homodimer. Requires FAD as cofactor.

The enzyme catalyses 2 reduced [2Fe-2S]-[ferredoxin] + NADP(+) + H(+) = 2 oxidized [2Fe-2S]-[ferredoxin] + NADPH. This chain is Ferredoxin--NADP reductase, found in Saccharopolyspora erythraea (strain ATCC 11635 / DSM 40517 / JCM 4748 / NBRC 13426 / NCIMB 8594 / NRRL 2338).